The sequence spans 184 residues: Probable RNA 2'-phosphotransferase (184 aa).

This sequence belongs to the KptA/TPT1 family.

Functionally, removes the 2'-phosphate from RNA via an intermediate in which the phosphate is ADP-ribosylated by NAD followed by a presumed transesterification to release the RNA and generate ADP-ribose 1''-2''-cyclic phosphate (APPR&gt;P). May function as an ADP-ribosylase. The chain is Probable RNA 2'-phosphotransferase from Rhizobium leguminosarum bv. trifolii (strain WSM2304).